Consider the following 154-residue polypeptide: Myoglobin (154 aa).

The Globin domain occupies 2-148 (GLSDQEWQQV…FRNDMASKYK (147 aa)). A nitrite-binding site is contributed by His65. Position 65 (His65) interacts with O2. A heme b-binding site is contributed by His94.

It belongs to the globin family. As to quaternary structure, monomeric.

The protein localises to the cytoplasm. The protein resides in the sarcoplasm. The enzyme catalyses Fe(III)-heme b-[protein] + nitric oxide + H2O = Fe(II)-heme b-[protein] + nitrite + 2 H(+). It carries out the reaction H2O2 + AH2 = A + 2 H2O. Functionally, monomeric heme protein which primary function is to store oxygen and facilitate its diffusion within muscle tissues. Reversibly binds oxygen through a pentacoordinated heme iron and enables its timely and efficient release as needed during periods of heightened demand. Depending on the oxidative conditions of tissues and cells, and in addition to its ability to bind oxygen, it also has a nitrite reductase activity whereby it regulates the production of bioactive nitric oxide. Under stress conditions, like hypoxia and anoxia, it also protects cells against reactive oxygen species thanks to its pseudoperoxidase activity. The chain is Myoglobin (MB) from Cerorhinca monocerata (Rhinoceros auklet).